A 1984-amino-acid polypeptide reads, in one-letter code: Vitellogenin receptor Yl (1984 aa).

Basic and acidic residues predominate over residues methionine 1–serine 19. A disordered region spans residues methionine 1–arginine 48. A glycan (N-linked (GlcNAc...) asparagine) is linked at asparagine 30. Positions asparagine 30–arginine 48 are enriched in polar residues. LDL-receptor class A domains lie at arginine 89 to aspartate 125, leucine 128 to proline 167, serine 183 to lysine 221, threonine 226 to leucine 263, and leucine 265 to histidine 305. 20 cysteine pairs are disulfide-bonded: cysteine 90–cysteine 102, cysteine 97–cysteine 115, cysteine 109–cysteine 124, cysteine 129–cysteine 144, cysteine 137–cysteine 157, cysteine 151–cysteine 166, cysteine 184–cysteine 197, cysteine 191–cysteine 210, cysteine 204–cysteine 220, cysteine 227–cysteine 239, cysteine 234–cysteine 253, cysteine 247–cysteine 262, cysteine 266–cysteine 281, cysteine 275–cysteine 294, cysteine 288–cysteine 304, cysteine 310–cysteine 321, cysteine 315–cysteine 331, cysteine 352–cysteine 363, cysteine 359–cysteine 372, and cysteine 374–cysteine 387. The region spanning serine 306–glutamate 343 is the EGF-like 1 domain. Residues aspartate 348–arginine 388 enclose the EGF-like 2; calcium-binding domain. N-linked (GlcNAc...) asparagine glycans are attached at residues asparagine 365, asparagine 384, and asparagine 429. LDL-receptor class B repeat units lie at residues serine 441–threonine 485, glutamine 486–lysine 528, glycine 529–glutamine 572, and glutamine 573–glutamine 615. N-linked (GlcNAc...) asparagine glycosylation is found at asparagine 666, asparagine 749, and asparagine 782. LDL-receptor class B repeat units follow at residues glycine 750–serine 792, arginine 793–glutamate 836, glutamine 884–aspartate 925, and proline 934–histidine 940. An N-linked (GlcNAc...) asparagine glycan is attached at asparagine 1022. 5 LDL-receptor class A domains span residues threonine 1024–aspartate 1063, leucine 1073–glutamate 1110, lysine 1117–glutamate 1153, arginine 1157–valine 1194, and serine 1197–glycine 1233. 15 disulfides stabilise this stretch: cysteine 1025-cysteine 1040, cysteine 1035-cysteine 1053, cysteine 1047-cysteine 1062, cysteine 1074-cysteine 1087, cysteine 1081-cysteine 1100, cysteine 1094-cysteine 1109, cysteine 1118-cysteine 1130, cysteine 1125-cysteine 1143, cysteine 1137-cysteine 1152, cysteine 1158-cysteine 1170, cysteine 1165-cysteine 1183, cysteine 1177-cysteine 1193, cysteine 1198-cysteine 1210, cysteine 1205-cysteine 1223, and cysteine 1217-cysteine 1232. The N-linked (GlcNAc...) asparagine glycan is linked to asparagine 1240. 2 consecutive LDL-receptor class A domains span residues serine 1242 to glycine 1280 and valine 1282 to glutamate 1319. 6 cysteine pairs are disulfide-bonded: cysteine 1243-cysteine 1257, cysteine 1250-cysteine 1270, cysteine 1264-cysteine 1279, cysteine 1283-cysteine 1296, cysteine 1290-cysteine 1309, and cysteine 1303-cysteine 1318. Residue asparagine 1265 is glycosylated (N-linked (GlcNAc...) asparagine). Residue asparagine 1326 is glycosylated (N-linked (GlcNAc...) asparagine). One can recognise an LDL-receptor class A 13 domain in the interval serine 1339 to alanine 1376. Cystine bridges form between cysteine 1340–cysteine 1352, cysteine 1347–cysteine 1365, cysteine 1359–cysteine 1375, cysteine 1422–cysteine 1432, and cysteine 1428–cysteine 1441. In terms of domain architecture, EGF-like 3; calcium-binding spans aspartate 1418–arginine 1453. Residues asparagine 1475 and asparagine 1490 are each glycosylated (N-linked (GlcNAc...) asparagine). LDL-receptor class B repeat units lie at residues alanine 1588–glutamine 1637 and glutamine 1638–asparagine 1687. The chain crosses the membrane as a helical span at residues tryptophan 1800 to tyrosine 1820. The Cytoplasmic portion of the chain corresponds to tyrosine 1821–serine 1984. A Phosphoserine modification is found at serine 1926. 2 disordered regions span residues lysine 1927–proline 1951 and serine 1965–serine 1984. The segment covering aspartate 1932 to valine 1946 has biased composition (gly residues).

It belongs to the LDLR family. Interacts with osk (isoform A). As to expression, ovary.

The protein localises to the cell membrane. It is found in the cytoplasm. Its subcellular location is the cell cortex. It localises to the cytoplasmic vesicle. The protein resides in the clathrin-coated vesicle membrane. The protein localises to the early endosome membrane. It is found in the endosome. Its subcellular location is the multivesicular body lumen. In terms of biological role, cell surface receptor involved in uptake of vitellogenins (yolk proteins) into developing oocytes by receptor-mediated endocytosis. May also mediate uptake of apolpp/apolipophorins and their incorporation into yolk granules. Along with its ligands, required for maintenance of microtubule plus-end orientation towards the posterior pole of oocytes. Involved in polarized localization of germ plasm components, such as osk mRNA and vas protein, to the oocyte posterior cortex. Receptor-mediated endocytosis of vitellogenin receptor ligands is critical for osk (isoform A) mediated actin reorganization and the anchoring of germ plasm components to the oocyte cortex. The polypeptide is Vitellogenin receptor Yl (Drosophila melanogaster (Fruit fly)).